The primary structure comprises 693 residues: MSAREPAGRRRRASTRPRASPVADEPAGDGVGFMGYLRAVFRGDDDSELEALEEMAGDEPPVRRRREGPRARRRRASEAPPTSHRRASRQRPGPDAARSQSVRGRLDDDDEVPRGPPQARQGGYLGPVDARAILGRVGGSRVAPSPLFLEELQYEEDDYPEDVGPEDGGGARSPPKVEVLEGRVPGPELRAAFPLDRLAPQVAVWDESVRSALALGHPAGFYPCPDSAFGLSRVGVMHFASPDNPAVFFRQTLQQGEALAWYITGDGILDLTDRRTKTSPAQAMSFLADAVVRLAINGWVCGTRLHAEARGSDLDDRAAELRRQFASLTALRPVGAAAVPLLSAGGLVSPQSGPDAAVFRSSLGSLLYWPGVRALLDRDCRVAARYAGRMTYLATGALLARFNPDAVRCVLTREAAFLGRVLDVLAVMAEQTVHWLSVVVGARLHPHVHHPAFADVAREELFRALPLGSPAVVGAEHEALGDTAARRLLANSGLNAVLGAAVYALHTALATVTLKYARACGDAHRRRDDAAATRRILAAGLVLQRLLGFADTVVACVTLAAFDGGFTAPEVGTYTPLRYACVLRATQPLYARTTPAKFWADVRAAAEHVDLRPASSAPRAPVSGTADPAFLLKDLEPFPPAPVSGGSVLGPGVRVVDIMSQFRKLLMGDEGAAALRAHVSGRRATGLGGPPRP.

Disordered regions lie at residues 1-32 and 48-126; these read MSAREPAGRRRRASTRPRASPVADEPAGDGVG and ELEA…GYLG. Residues 48 to 57 show a composition bias toward acidic residues; it reads ELEALEEMAG. The tract at residues 50–75 is RNA-binding; it reads EALEEMAGDEPPVRRRREGPRARRRR. The Nuclear localization signal motif lies at 63–75; that stretch reads RRRREGPRARRRR. Residues 63-75 are compositionally biased toward basic residues; it reads RRRREGPRARRRR. A Nuclear export signal motif is present at residues 647–670; the sequence is SVLGPGVRVVDIMSQFRKLLMGDE.

Belongs to the alphaherpesvirinae HHV-1 UL47 family. As to quaternary structure, interacts with US3 kinase. Interacts with UL31 and UL34; these interactions seem important for efficient virion nuclear egress. Interacts with UL41/VHS. Phosphorylated by US3. This phosphorylation is required for proper nuclear localization.

The protein resides in the virion tegument. It localises to the host nucleus. Its subcellular location is the host cytoplasm. Tegument protein that can bind to various RNA transcripts. Plays a role in the attenuation of selective viral and cellular mRNA degradation by modulating the activity of host shutoff RNase UL41/VHS. Also plays a role in the primary envelopment of virions in the perinuclear space, probably by interacting with two nuclear egress proteins UL31 and UL34. In Human herpesvirus 1 (strain F) (HHV-1), this protein is Tegument protein UL47.